The following is a 183-amino-acid chain: ATP synthase subunit b, chloroplastic (183 aa).

The chain crosses the membrane as a helical span at residues 28 to 48 (DIFEANVINILLLLFGLIYVL).

Belongs to the ATPase B chain family. F-type ATPases have 2 components, F(1) - the catalytic core - and F(0) - the membrane proton channel. F(1) has five subunits: alpha(3), beta(3), gamma(1), delta(1), epsilon(1). F(0) has four main subunits: a(1), b(1), b'(1) and c(10-14). The alpha and beta chains form an alternating ring which encloses part of the gamma chain. F(1) is attached to F(0) by a central stalk formed by the gamma and epsilon chains, while a peripheral stalk is formed by the delta, b and b' chains.

The protein localises to the plastid. It localises to the chloroplast thylakoid membrane. In terms of biological role, f(1)F(0) ATP synthase produces ATP from ADP in the presence of a proton or sodium gradient. F-type ATPases consist of two structural domains, F(1) containing the extramembraneous catalytic core and F(0) containing the membrane proton channel, linked together by a central stalk and a peripheral stalk. During catalysis, ATP synthesis in the catalytic domain of F(1) is coupled via a rotary mechanism of the central stalk subunits to proton translocation. Component of the F(0) channel, it forms part of the peripheral stalk, linking F(1) to F(0). This Pyropia yezoensis (Susabi-nori) protein is ATP synthase subunit b, chloroplastic.